The chain runs to 206 residues: N-(5'-phosphoribosyl)anthranilate isomerase (206 aa).

It belongs to the TrpF family.

The enzyme catalyses N-(5-phospho-beta-D-ribosyl)anthranilate = 1-(2-carboxyphenylamino)-1-deoxy-D-ribulose 5-phosphate. It participates in amino-acid biosynthesis; L-tryptophan biosynthesis; L-tryptophan from chorismate: step 3/5. This is N-(5'-phosphoribosyl)anthranilate isomerase from Rubrobacter xylanophilus (strain DSM 9941 / JCM 11954 / NBRC 16129 / PRD-1).